The sequence spans 361 residues: Phospho-N-acetylmuramoyl-pentapeptide-transferase (361 aa).

A run of 10 helical transmembrane segments spans residues 25–45 (RAVLASLTALGIGLALGPWVI), 73–93 (TMGGTLILLSIGITTLLWADL), 97–117 (YVWLLLAVLFGTGAIGFYDDW), 134–154 (MFWQSAIAIFAGIYLISTASL), 168–188 (VIYPFGVVGFCILTYFVIVGT), 200–220 (GLAAMPVVMVSAALAVFAYVA), 240–260 (VAVFCAAMAGACLAFLWFNAY), 264–284 (VFMGDVGALALGAALGTVAVI), 289–309 (IVLFVMGGLFVMEALSVMIQV), and 338–358 (QVVVRFWIITMMLVLAGLSTL).

The protein belongs to the glycosyltransferase 4 family. MraY subfamily. The cofactor is Mg(2+).

Its subcellular location is the cell inner membrane. The enzyme catalyses UDP-N-acetyl-alpha-D-muramoyl-L-alanyl-gamma-D-glutamyl-meso-2,6-diaminopimeloyl-D-alanyl-D-alanine + di-trans,octa-cis-undecaprenyl phosphate = di-trans,octa-cis-undecaprenyl diphospho-N-acetyl-alpha-D-muramoyl-L-alanyl-D-glutamyl-meso-2,6-diaminopimeloyl-D-alanyl-D-alanine + UMP. It participates in cell wall biogenesis; peptidoglycan biosynthesis. Catalyzes the initial step of the lipid cycle reactions in the biosynthesis of the cell wall peptidoglycan: transfers peptidoglycan precursor phospho-MurNAc-pentapeptide from UDP-MurNAc-pentapeptide onto the lipid carrier undecaprenyl phosphate, yielding undecaprenyl-pyrophosphoryl-MurNAc-pentapeptide, known as lipid I. The protein is Phospho-N-acetylmuramoyl-pentapeptide-transferase of Laribacter hongkongensis (strain HLHK9).